We begin with the raw amino-acid sequence, 421 residues long: Serine--tRNA ligase (421 aa).

229–231 (TAE) contributes to the L-serine binding site. 260–262 (RAE) lines the ATP pocket. E283 lines the L-serine pocket. Residue 347-350 (EISS) participates in ATP binding. An L-serine-binding site is contributed by S383.

Belongs to the class-II aminoacyl-tRNA synthetase family. Type-1 seryl-tRNA synthetase subfamily. In terms of assembly, homodimer. The tRNA molecule binds across the dimer.

The protein localises to the cytoplasm. The enzyme catalyses tRNA(Ser) + L-serine + ATP = L-seryl-tRNA(Ser) + AMP + diphosphate + H(+). The catalysed reaction is tRNA(Sec) + L-serine + ATP = L-seryl-tRNA(Sec) + AMP + diphosphate + H(+). The protein operates within aminoacyl-tRNA biosynthesis; selenocysteinyl-tRNA(Sec) biosynthesis; L-seryl-tRNA(Sec) from L-serine and tRNA(Sec): step 1/1. Catalyzes the attachment of serine to tRNA(Ser). Is also able to aminoacylate tRNA(Sec) with serine, to form the misacylated tRNA L-seryl-tRNA(Sec), which will be further converted into selenocysteinyl-tRNA(Sec). This Desulfitobacterium hafniense (strain DSM 10664 / DCB-2) protein is Serine--tRNA ligase.